A 289-amino-acid chain; its full sequence is Rhodopsin (289 aa).

Topologically, residues 1 to 7 (YLVSPAA) are extracellular. The helical transmembrane segment at 8–32 (YAALGAYMFLLILIGFPVNFLTLYV) threads the bilayer. Residues 33–44 (TLEHKKLRTPLN) lie on the Cytoplasmic side of the membrane. Residues 45–67 (YILLNLAVADLFMVLGGFTTTMY) traverse the membrane as a helical segment. Residues 68-81 (TSMHGYFVLGRLGC) lie on the Extracellular side of the membrane. C81 and C158 form a disulfide bridge. A helical membrane pass occupies residues 82 to 104 (NLEGFFATLGGEIALWSLVVLAI). The 'Ionic lock' involved in activated form stabilization signature appears at 105–107 (ERW). The Cytoplasmic segment spans residues 105–123 (ERWIVVCKPISNFRFTEDN). Residues 124-144 (AIMGLAFSWVMALTCAVPPLV) form a helical membrane-spanning segment. Residues 145–173 (GWSRYIPEGMQCSCGVDYYTRAEGFNNES) lie on the Extracellular side of the membrane. N171 carries N-linked (GlcNAc...) asparagine glycosylation. Residues 174–195 (FVIYMFIVHFPIPLSVIFFCYG) traverse the membrane as a helical segment. The Cytoplasmic segment spans residues 196 to 223 (RLLCAVKEAAAAQQESETTQRAEKEVSR). The helical transmembrane segment at 224–245 (MVVILVIGFLVCWLPYASVAWW) threads the bilayer. Over 246 to 257 (IFCNQGSDFGPI) the chain is Extracellular. A helical transmembrane segment spans residues 258–279 (FMTLPSFFAKRPAIYNPMIYIC). K267 carries the post-translational modification N6-(retinylidene)lysine. Topologically, residues 280–289 (MNKQFRHCMI) are cytoplasmic.

Belongs to the G-protein coupled receptor 1 family. Opsin subfamily. In terms of processing, phosphorylated on some or all of the serine and threonine residues present in the C-terminal region. Post-translationally, contains one covalently linked retinal chromophore.

It is found in the membrane. Its subcellular location is the cell projection. The protein resides in the cilium. The protein localises to the photoreceptor outer segment. Photoreceptor required for image-forming vision at low light intensity. While most salt water fish species use retinal as chromophore, most freshwater fish use 3-dehydroretinal, or a mixture of retinal and 3-dehydroretinal. Light-induced isomerization of 11-cis to all-trans retinal triggers a conformational change that activates signaling via G-proteins. Subsequent receptor phosphorylation mediates displacement of the bound G-protein alpha subunit by arrestin and terminates signaling. This chain is Rhodopsin (rho), found in Batrachocottus multiradiatus (Baikal sculpin).